We begin with the raw amino-acid sequence, 149 residues long: MRCPFCTAEETKVIDSRLAADGYQIRRRRECIGCKERFTTFESAELALPYIIKNNGNREPFDLNKLEVSLNRALEKRPVHADDVDNVISKIIFQLKALGEREVPSKSVGHLAMDGLKQLDKVAYIRFASVYLSFDDIEEFTKEIEKLRE.

The segment at Cys-3–Cys-34 is a zinc-finger region. One can recognise an ATP-cone domain in the interval Pro-49–Glu-139.

The protein belongs to the NrdR family. Requires Zn(2+) as cofactor.

Its function is as follows. Negatively regulates transcription of bacterial ribonucleotide reductase nrd genes and operons by binding to NrdR-boxes. The protein is Transcriptional repressor NrdR of Haemophilus ducreyi (strain 35000HP / ATCC 700724).